We begin with the raw amino-acid sequence, 452 residues long: Pup--protein ligase (452 aa).

A Mg(2+)-binding site is contributed by glutamate 9. Arginine 53 provides a ligand contact to ATP. Mg(2+) is bound at residue tyrosine 55. Aspartate 57 serves as the catalytic Proton acceptor. Residue glutamate 63 participates in Mg(2+) binding. Threonine 66 and tryptophan 419 together coordinate ATP.

This sequence belongs to the Pup ligase/Pup deamidase family. Pup-conjugating enzyme subfamily.

The enzyme catalyses ATP + [prokaryotic ubiquitin-like protein]-L-glutamate + [protein]-L-lysine = ADP + phosphate + N(6)-([prokaryotic ubiquitin-like protein]-gamma-L-glutamyl)-[protein]-L-lysine.. It participates in protein degradation; proteasomal Pup-dependent pathway. The protein operates within protein modification; protein pupylation. Functionally, catalyzes the covalent attachment of the prokaryotic ubiquitin-like protein modifier Pup to the proteasomal substrate proteins, thereby targeting them for proteasomal degradation. This tagging system is termed pupylation. The ligation reaction involves the side-chain carboxylate of the C-terminal glutamate of Pup and the side-chain amino group of a substrate lysine. The sequence is that of Pup--protein ligase from Mycobacteroides abscessus (strain ATCC 19977 / DSM 44196 / CCUG 20993 / CIP 104536 / JCM 13569 / NCTC 13031 / TMC 1543 / L948) (Mycobacterium abscessus).